A 248-amino-acid chain; its full sequence is Glutathione S-transferase omega-2 (248 aa).

A GST N-terminal domain is found at 22–101; sequence GVIRIYSMRF…YLDDVYPGRK (80 aa). Cysteine 32 acts as the Nucleophile in catalysis. Glutathione-binding positions include lysine 59, isoleucine 72, and 85–86; that span reads ES. Residues 106–231 form the GST C-terminal domain; the sequence is DPYERARQKM…VFLGFLNLYF (126 aa).

It belongs to the GST superfamily. Omega family.

It carries out the reaction RX + glutathione = an S-substituted glutathione + a halide anion + H(+). The catalysed reaction is L-dehydroascorbate + 2 glutathione = glutathione disulfide + L-ascorbate. The enzyme catalyses methylarsonate + 2 glutathione + H(+) = methylarsonous acid + glutathione disulfide + H2O. Functionally, exhibits glutathione-dependent thiol transferase activity. Has high dehydroascorbate reductase activity and may contribute to the recycling of ascorbic acid. Participates in the biotransformation of inorganic arsenic and reduces monomethylarsonic acid (MMA). The protein is Glutathione S-transferase omega-2 (Gsto2) of Mus musculus (Mouse).